The primary structure comprises 343 residues: 3-hydroxy-3-methylglutaryl-CoA lyase, cytoplasmic (343 aa).

The N-myristoyl glycine moiety is linked to residue Gly2. One can recognise a Pyruvate carboxyltransferase domain in the interval 48-315 (VKIVEVGPRD…NTGVDLHKVM (268 aa)). Arg56 lines the substrate pocket. 3 residues coordinate a divalent metal cation: Asp57, His248, and His250. The active site involves Cys281. An a divalent metal cation-binding site is contributed by Asn290.

It belongs to the HMG-CoA lyase family. A divalent metal cation is required as a cofactor. As to expression, present at high level in duodenum and small intestine (at protein level).

It is found in the cytoplasm. It localises to the cytosol. Its subcellular location is the endoplasmic reticulum membrane. The enzyme catalyses (3S)-3-hydroxy-3-methylglutaryl-CoA = acetoacetate + acetyl-CoA. Its pathway is metabolic intermediate metabolism; (S)-3-hydroxy-3-methylglutaryl-CoA degradation; acetoacetate from (S)-3-hydroxy-3-methylglutaryl-CoA: step 1/1. In terms of biological role, non-mitochondrial 3-hydroxy-3-methylglutaryl-CoA lyase that catalyzes a cation-dependent cleavage of (S)-3-hydroxy-3-methylglutaryl-CoA into acetyl-CoA and acetoacetate, a key step in ketogenesis, the products of which support energy production in nonhepatic animal tissues. The polypeptide is 3-hydroxy-3-methylglutaryl-CoA lyase, cytoplasmic (Hmgcll1) (Rattus norvegicus (Rat)).